We begin with the raw amino-acid sequence, 190 residues long: PBP1-interacting protein LSM12 (190 aa).

Residues 2–69 (PVCNNDSQLI…IKEVTALRDN (68 aa)) form the Sm domain. The region spanning 84–190 (PSMQAARDRS…ERVQKTLSKK (107 aa)) is the AD domain.

The protein belongs to the LSM12 family. In terms of assembly, forms a complex composed of at least MKT1, PBP1, XAC1 and LSM12. Forms a complex composed of at least MKT1L, PBP1, XAC1 and LSM12. Within the complex, interacts with PBP1; the interaction is direct.

Involved in post-transcriptional regulation of gene expression. This Trypanosoma brucei brucei (strain 927/4 GUTat10.1) protein is PBP1-interacting protein LSM12.